The primary structure comprises 123 residues: Small ribosomal subunit protein uS12 (123 aa).

The segment at methionine 1 to glycine 32 is disordered. Aspartate 89 bears the 3-methylthioaspartic acid mark.

Belongs to the universal ribosomal protein uS12 family. Part of the 30S ribosomal subunit. Contacts proteins S8 and S17. May interact with IF1 in the 30S initiation complex.

In terms of biological role, with S4 and S5 plays an important role in translational accuracy. Interacts with and stabilizes bases of the 16S rRNA that are involved in tRNA selection in the A site and with the mRNA backbone. Located at the interface of the 30S and 50S subunits, it traverses the body of the 30S subunit contacting proteins on the other side and probably holding the rRNA structure together. The combined cluster of proteins S8, S12 and S17 appears to hold together the shoulder and platform of the 30S subunit. The polypeptide is Small ribosomal subunit protein uS12 (Desulfatibacillum aliphaticivorans).